A 54-amino-acid chain; its full sequence is Light-harvesting protein B-880 beta chain (54 aa).

Topologically, residues 1-20 (AEDRSSLSGVSDAEAKEFHA) are cytoplasmic. The a bacteriochlorophyll site is built by H19 and H37. The chain crosses the membrane as a helical span at residues 21-43 (LFVSSFMGFMVVAVLAHVLAWAW). Topologically, residues 44-54 (RPWIPGPKGWA) are periplasmic.

Belongs to the antenna complex beta subunit family. In terms of assembly, the core complex is formed by different alpha and beta chains, binding bacteriochlorophyll molecules, and arranged most probably in tetrameric structures disposed around the reaction center. The non-pigmented gamma chains may constitute additional components.

It localises to the cell inner membrane. In terms of biological role, antenna complexes are light-harvesting systems, which transfer the excitation energy to the reaction centers. The chain is Light-harvesting protein B-880 beta chain from Rhodoblastus acidophilus (Rhodopseudomonas acidophila).